The primary structure comprises 1434 residues: Receptor-type tyrosine-protein phosphatase U (1434 aa).

Residues M1–A17 form the signal peptide. Topologically, residues L18 to L748 are extracellular. The 163-residue stretch at A25–K187 folds into the MAM domain. N74 carries N-linked (GlcNAc...) asparagine glycosylation. Positions P189 to S274 constitute an Ig-like C2-type domain. The cysteines at positions 209 and 263 are disulfide-linked. Fibronectin type-III domains are found at residues P287–P382, A385–D483, V484–T590, and P597–K677. The N-linked (GlcNAc...) asparagine glycan is linked to N409. N684 carries an N-linked (GlcNAc...) asparagine glycan. The chain crosses the membrane as a helical span at residues G749 to I769. Residues R770–R1434 are Cytoplasmic-facing. The segment covering R824–L839 has biased composition (polar residues). Residues R824–G851 are disordered. 2 Tyrosine-protein phosphatase domains span residues K876–A1132 and L1164–Y1427. Substrate contacts are provided by residues E1041, C1073–R1079, and Q1117. The active-site Phosphocysteine intermediate is C1073. The active-site Phosphocysteine intermediate is C1368.

The protein belongs to the protein-tyrosine phosphatase family. Receptor class 2B subfamily.

It localises to the cell junction. The protein localises to the cell membrane. The catalysed reaction is O-phospho-L-tyrosyl-[protein] + H2O = L-tyrosyl-[protein] + phosphate. Its function is as follows. Tyrosine-protein phosphatase which dephosphorylates CTNNB1. May function in cell proliferation and migration and play a role in the maintenance of epithelial integrity. In Gallus gallus (Chicken), this protein is Receptor-type tyrosine-protein phosphatase U (PTPRU).